The following is a 304-amino-acid chain: N-acetyl-D-glucosamine kinase (304 aa).

ATP contacts are provided by residues 4–11 (GFDMGGTK) and 133–140 (GVGGGLIV). Positions 157, 177, 179, and 184 each coordinate Zn(2+).

The protein belongs to the ROK (NagC/XylR) family. NagK subfamily.

It carries out the reaction N-acetyl-D-glucosamine + ATP = N-acetyl-D-glucosamine 6-phosphate + ADP + H(+). It participates in cell wall biogenesis; peptidoglycan recycling. Catalyzes the phosphorylation of N-acetyl-D-glucosamine (GlcNAc) derived from cell-wall degradation, yielding GlcNAc-6-P. This Yersinia pseudotuberculosis serotype O:1b (strain IP 31758) protein is N-acetyl-D-glucosamine kinase.